A 282-amino-acid chain; its full sequence is 4-hydroxy-3-methylbut-2-enyl diphosphate reductase (282 aa).

Cys14 is a binding site for [4Fe-4S] cluster. (2E)-4-hydroxy-3-methylbut-2-enyl diphosphate contacts are provided by His43 and His78. Dimethylallyl diphosphate-binding residues include His43 and His78. Positions 43 and 78 each coordinate isopentenyl diphosphate. Cys100 contributes to the [4Fe-4S] cluster binding site. His128 provides a ligand contact to (2E)-4-hydroxy-3-methylbut-2-enyl diphosphate. Dimethylallyl diphosphate is bound at residue His128. His128 serves as a coordination point for isopentenyl diphosphate. The active-site Proton donor is the Glu130. Residue Thr164 coordinates (2E)-4-hydroxy-3-methylbut-2-enyl diphosphate. Cys192 provides a ligand contact to [4Fe-4S] cluster. 4 residues coordinate (2E)-4-hydroxy-3-methylbut-2-enyl diphosphate: Ser220, Ser221, Asn222, and Ser266. Dimethylallyl diphosphate contacts are provided by Ser220, Ser221, Asn222, and Ser266. Isopentenyl diphosphate is bound by residues Ser220, Ser221, Asn222, and Ser266.

The protein belongs to the IspH family. Requires [4Fe-4S] cluster as cofactor.

The enzyme catalyses isopentenyl diphosphate + 2 oxidized [2Fe-2S]-[ferredoxin] + H2O = (2E)-4-hydroxy-3-methylbut-2-enyl diphosphate + 2 reduced [2Fe-2S]-[ferredoxin] + 2 H(+). The catalysed reaction is dimethylallyl diphosphate + 2 oxidized [2Fe-2S]-[ferredoxin] + H2O = (2E)-4-hydroxy-3-methylbut-2-enyl diphosphate + 2 reduced [2Fe-2S]-[ferredoxin] + 2 H(+). Its pathway is isoprenoid biosynthesis; dimethylallyl diphosphate biosynthesis; dimethylallyl diphosphate from (2E)-4-hydroxy-3-methylbutenyl diphosphate: step 1/1. It participates in isoprenoid biosynthesis; isopentenyl diphosphate biosynthesis via DXP pathway; isopentenyl diphosphate from 1-deoxy-D-xylulose 5-phosphate: step 6/6. In terms of biological role, catalyzes the conversion of 1-hydroxy-2-methyl-2-(E)-butenyl 4-diphosphate (HMBPP) into a mixture of isopentenyl diphosphate (IPP) and dimethylallyl diphosphate (DMAPP). Acts in the terminal step of the DOXP/MEP pathway for isoprenoid precursor biosynthesis. The polypeptide is 4-hydroxy-3-methylbut-2-enyl diphosphate reductase (Clostridium perfringens (strain SM101 / Type A)).